A 383-amino-acid polypeptide reads, in one-letter code: MSTNCFSGYKDLIKEGDLTLIWVSRDNIKPVRMHSEEVFNTRYGSFPHKDIIGKPYGSQIAIRTKGSNKFAFVHVLQPTPELWTLSLPHRTQIVYTPDSSYIMQRLNCSPHSRVIEAGTGSGSFSHAFARSVGHLFSFEFHHIRYEQALEEFKEHGLIDDNVTITHRDVCQGGFLIKKGDTTSYEFGNNETAASLNANVVFLDLPAPWDAIPHLDSVISVDEKVGLCCFSPCIEQVDKTLDVLEKYGWTDVEMVEIQGRQYESRRQMVRSLNDALERLRDIKRHKLQGVERRKRMFNNTIDSNDEKVGKRNEDGVPLTEKAKFNPFGKGSRIKEGDSNYKWKEVTKMEAEIKSHTSYLTFAFKVVNRSRDDEKVNEILRSTEK.

Residues Val94, 121-124 (SGSF), Glu139, Arg144, 168-169 (DV), and Asp203 contribute to the S-adenosyl-L-methionine site. Ser302 is modified (phosphoserine).

Belongs to the class I-like SAM-binding methyltransferase superfamily. TRM61 family. As to quaternary structure, heterotetramer; composed of two copies of TRM6/GCD10 and two copies of TRM61/GCD14.

The protein localises to the nucleus. The enzyme catalyses adenosine(58) in tRNA + S-adenosyl-L-methionine = N(1)-methyladenosine(58) in tRNA + S-adenosyl-L-homocysteine + H(+). In terms of biological role, catalytic subunit of tRNA (adenine-N(1)-)-methyltransferase, which catalyzes the formation of N(1)-methyladenine at position 58 (m1A58) in initiator methionyl-tRNA. GCD14 is also required for repression of GCN4 mRNA translation by the upstream open reading frames (uORFs) under conditions of amino acid sufficiency. The polypeptide is tRNA (adenine(58)-N(1))-methyltransferase catalytic subunit TRM61 (GCD14) (Saccharomyces cerevisiae (strain ATCC 204508 / S288c) (Baker's yeast)).